Consider the following 1252-residue polypeptide: Elongator complex protein 1 (1252 aa).

The mediates dimerization stretch occupies residues 814 to 1252; that stretch reads VDVNDLYNVA…MMDWQHEILQ (439 aa). Ser-1094 carries the phosphoserine modification. Positions 1097–1116 are disordered; that stretch reads SSQYSGTSRRTGKTFRSSKN. Basic residues predominate over residues 1106–1116; that stretch reads RTGKTFRSSKN. Positions 1111–1129 are required for binding to tRNA; it reads FRSSKNRRKHERKLFSLKP.

The protein belongs to the ELP1/IKA1 family. As to quaternary structure, homodimer. Component of the elongator complex composed of Elp1, Elp2, Elp3, Elp4, Elp5 and Elp6. The elongator complex associates with and stabilizes microtubules; efficient interaction requires the full complex.

Its subcellular location is the cytoplasm. It localises to the nucleus. The protein resides in the cytoskeleton. The protein localises to the spindle. The protein operates within tRNA modification; 5-methoxycarbonylmethyl-2-thiouridine-tRNA biosynthesis. Component of the elongator complex, which is required for multiple tRNA modifications, including mcm5U (5-methoxycarbonylmethyl uridine), mcm5s2U (5-methoxycarbonylmethyl-2-thiouridine), and ncm5U (5-carbamoylmethyl uridine). The elongator complex catalyzes formation of carboxymethyluridine in the wobble base at position 34 in tRNAs. ELP1 binds to tRNA, mediating interaction of the elongator complex with tRNA. Binding by the elongator complex stabilizes microtubules and promotes their growth. This induces central spindle asymmetry, promoting polarized signaling endosome trafficking during asymmetric cell division and cell fate assignation of sensory organ precursor cells. Involved in protein synthesis-dependent long-term memory formation, probably as part of the elongator complex. This is Elongator complex protein 1 from Drosophila melanogaster (Fruit fly).